Here is a 363-residue protein sequence, read N- to C-terminus: Aminomethyltransferase (363 aa).

Belongs to the GcvT family. In terms of assembly, the glycine cleavage system is composed of four proteins: P, T, L and H.

It catalyses the reaction N(6)-[(R)-S(8)-aminomethyldihydrolipoyl]-L-lysyl-[protein] + (6S)-5,6,7,8-tetrahydrofolate = N(6)-[(R)-dihydrolipoyl]-L-lysyl-[protein] + (6R)-5,10-methylene-5,6,7,8-tetrahydrofolate + NH4(+). Functionally, the glycine cleavage system catalyzes the degradation of glycine. In Picosynechococcus sp. (strain ATCC 27264 / PCC 7002 / PR-6) (Agmenellum quadruplicatum), this protein is Aminomethyltransferase.